A 428-amino-acid polypeptide reads, in one-letter code: Inward rectifier potassium channel 2 (428 aa).

Residues 1–81 (MGSVRTNRYS…IFTTCVDIRW (81 aa)) lie on the Cytoplasmic side of the membrane. Cysteine 76 is modified (S-nitrosocysteine). The chain crosses the membrane as a helical span at residues 82–106 (RWMLVIFCLAFVLSWLFFGCVFWLI). Residues 107-128 (ALLHGDLDTSKVSKACVSEVNS) are Extracellular-facing. Residues 129–140 (FTAAFLFSIETQ) constitute an intramembrane region (helical; Pore-forming). The segment at residues 141-147 (TTIGYGF) is an intramembrane region (pore-forming). The Selectivity filter motif lies at 142-147 (TIGYGF). At 148–156 (RCVTDECPI) the chain is on the extracellular side. Residues 157 to 178 (AVFMVVFQSIVGCIIDAFIIGA) form a helical membrane-spanning segment. The Cytoplasmic segment spans residues 179-428 (VMAKMAKPKK…PRPLRRESEI (250 aa)). Positions 181 to 208 (AKMAKPKKRNETLVFSHNAVIAMRDGKL) are polyphosphoinositide (PIP2)-binding. The disordered stretch occupies residues 383–428 (TSKEEEEDSENGVPESTSTDSPPGIDLHNQASVPLEPRPLRRESEI). The short motif at 426–428 (SEI) is the PDZ-binding element.

It belongs to the inward rectifier-type potassium channel (TC 1.A.2.1) family. KCNJ2 subfamily. As to quaternary structure, homotetramer. Homomultimeric and heteromultimeric association with KCNJ4/Kir2.3. Can form heteromeric channels with Kir2.6/KCNJ18. Associates, via its PDZ-recognition domain, with a complex containing LIN7A, LIN7B, LIN7C, DLG1, CASK and APBA1. S-nitrosylation increases the open probability and inward rectifying currents. In terms of tissue distribution, prominently expressed in the central nervous system. Also found in other excitable tissues such as heart and skeletal muscle.

Its subcellular location is the cell membrane. The protein localises to the sarcolemma. The protein resides in the T-tubule. The catalysed reaction is K(+)(in) = K(+)(out). Activated by phosphatidylinositol 4,5 biphosphate (PtdIns(4,5)P2). Inward rectifier potassium channels are characterized by a greater tendency to allow potassium to flow into the cell rather than out of it. Their voltage dependence is regulated by the concentration of extracellular potassium; as external potassium is raised, the voltage range of the channel opening shifts to more positive voltages. The inward rectification is mainly due to the blockage of outward current by internal magnesium. Can be blocked by extracellular barium and cesium. Probably participates in establishing action potential waveform and excitability of neuronal and muscle tissues. This Mus musculus (Mouse) protein is Inward rectifier potassium channel 2 (Kcnj2).